Consider the following 372-residue polypeptide: DNA-directed RNA polymerase subunit alpha (372 aa).

Positions 1 to 268 (MIFDEDSNSI…DQFQPFINFD (268 aa)) are alpha N-terminal domain (alpha-NTD). The tract at residues 280 to 372 (KDTLPYDSNL…ESLSKQYSEE (93 aa)) is alpha C-terminal domain (alpha-CTD).

This sequence belongs to the RNA polymerase alpha chain family. In terms of assembly, homodimer. The RNAP catalytic core consists of 2 alpha, 1 beta, 1 beta' and 1 omega subunit. When a sigma factor is associated with the core the holoenzyme is formed, which can initiate transcription.

The enzyme catalyses RNA(n) + a ribonucleoside 5'-triphosphate = RNA(n+1) + diphosphate. Its function is as follows. DNA-dependent RNA polymerase catalyzes the transcription of DNA into RNA using the four ribonucleoside triphosphates as substrates. The polypeptide is DNA-directed RNA polymerase subunit alpha (Ehrlichia chaffeensis (strain ATCC CRL-10679 / Arkansas)).